The primary structure comprises 375 residues: S-adenosylmethionine:tRNA ribosyltransferase-isomerase (375 aa).

This sequence belongs to the QueA family. Monomer.

It localises to the cytoplasm. It carries out the reaction 7-aminomethyl-7-carbaguanosine(34) in tRNA + S-adenosyl-L-methionine = epoxyqueuosine(34) in tRNA + adenine + L-methionine + 2 H(+). It participates in tRNA modification; tRNA-queuosine biosynthesis. Its function is as follows. Transfers and isomerizes the ribose moiety from AdoMet to the 7-aminomethyl group of 7-deazaguanine (preQ1-tRNA) to give epoxyqueuosine (oQ-tRNA). The sequence is that of S-adenosylmethionine:tRNA ribosyltransferase-isomerase from Rickettsia typhi (strain ATCC VR-144 / Wilmington).